The primary structure comprises 395 residues: Flagellin A (395 aa).

Belongs to the bacterial flagellin family.

The protein localises to the secreted. It localises to the bacterial flagellum. Its function is as follows. Flagellin is the subunit protein which polymerizes to form the filaments of bacterial flagella. Homomer of FlaA is able to form a functional filament. This is Flagellin A (flaA) from Rhizobium meliloti (Ensifer meliloti).